The following is a 418-amino-acid chain: 3-deoxy-D-manno-octulosonic acid transferase (418 aa).

Residues 7-27 (FLSFLLLPIYFVIIFIRLLIG) form a helical; Signal-anchor membrane-spanning segment. The active-site Proton acceptor is the E60. Residues 264–265 (PR), 305–307 (FGE), and 330–333 (NILE) contribute to the CMP site.

This sequence belongs to the glycosyltransferase group 1 family. Glycosyltransferase 30 subfamily.

The protein localises to the cell inner membrane. The catalysed reaction is lipid IVA (E. coli) + CMP-3-deoxy-beta-D-manno-octulosonate = alpha-Kdo-(2-&gt;6)-lipid IVA (E. coli) + CMP + H(+). Its pathway is bacterial outer membrane biogenesis; LPS core biosynthesis. Involved in lipopolysaccharide (LPS) biosynthesis. Catalyzes the transfer of 3-deoxy-D-manno-octulosonate (Kdo) residue(s) from CMP-Kdo to lipid IV(A), the tetraacyldisaccharide-1,4'-bisphosphate precursor of lipid A. This chain is 3-deoxy-D-manno-octulosonic acid transferase (waaA), found in Rickettsia bellii (strain RML369-C).